A 227-amino-acid polypeptide reads, in one-letter code: Agamous-like MADS-box protein AGL17 (227 aa).

The 55-residue stretch at 3–57 (RGKIVIQKIDDSTSRQVTFSKRRKGLIKKAKELAILCDAEVCLIIFSNTDKLYDF) folds into the MADS-box domain. One can recognise a K-box domain in the interval 86–176 (VKFWQREAET…SRKVQRIHQE (91 aa)).

As to expression, preferentially expressed in roots.

The protein resides in the nucleus. Its function is as follows. Probable transcription factor. This Arabidopsis thaliana (Mouse-ear cress) protein is Agamous-like MADS-box protein AGL17 (AGL17).